The chain runs to 122 residues: Large ribosomal subunit protein uL14 (122 aa).

Belongs to the universal ribosomal protein uL14 family. As to quaternary structure, part of the 50S ribosomal subunit. Forms a cluster with proteins L3 and L19. In the 70S ribosome, L14 and L19 interact and together make contacts with the 16S rRNA in bridges B5 and B8.

In terms of biological role, binds to 23S rRNA. Forms part of two intersubunit bridges in the 70S ribosome. The protein is Large ribosomal subunit protein uL14 of Clostridioides difficile (strain 630) (Peptoclostridium difficile).